The following is a 354-amino-acid chain: Non-structural protein NS2 (354 aa).

Disordered regions lie at residues 163 to 196 and 229 to 269; these read NERE…DNEA and DERD…THIT. Basic and acidic residues-rich tracts occupy residues 178-196 and 237-249; these read SREE…DNEA and DERG…KTLS. The span at 250–260 shows a compositional bias: acidic residues; that stretch reads DDDDQGEDASD.

In terms of biological role, single-stranded RNA-binding protein. The polypeptide is Non-structural protein NS2 (Segment-8) (Bluetongue virus 17 (isolate USA) (BTV 17)).